Here is a 504-residue protein sequence, read N- to C-terminus: L-carnitine/gamma-butyrobetaine antiporter (504 aa).

12 consecutive transmembrane segments (helical) span residues I10–V30, W51–F71, I92–I112, G143–V163, F195–V215, L231–L251, S263–M283, W316–A336, L347–G367, W398–A418, L446–L466, and A475–I495.

It belongs to the BCCT transporter (TC 2.A.15) family. CaiT subfamily. Homotrimer.

It localises to the cell inner membrane. It carries out the reaction 4-(trimethylamino)butanoate(in) + (R)-carnitine(out) = 4-(trimethylamino)butanoate(out) + (R)-carnitine(in). Its pathway is amine and polyamine metabolism; carnitine metabolism. Its function is as follows. Catalyzes the exchange of L-carnitine for gamma-butyrobetaine. The sequence is that of L-carnitine/gamma-butyrobetaine antiporter from Escherichia coli O157:H7.